The chain runs to 271 residues: L-aspartate dehydrogenase (271 aa).

A124 and N192 together coordinate NAD(+). The active site involves H222.

Belongs to the L-aspartate dehydrogenase family.

The catalysed reaction is L-aspartate + NADP(+) + H2O = oxaloacetate + NH4(+) + NADPH + H(+). The enzyme catalyses L-aspartate + NAD(+) + H2O = oxaloacetate + NH4(+) + NADH + H(+). Its pathway is cofactor biosynthesis; NAD(+) biosynthesis; iminoaspartate from L-aspartate (dehydrogenase route): step 1/1. Specifically catalyzes the NAD or NADP-dependent dehydrogenation of L-aspartate to iminoaspartate. The sequence is that of L-aspartate dehydrogenase from Methanococcoides burtonii (strain DSM 6242 / NBRC 107633 / OCM 468 / ACE-M).